The primary structure comprises 251 residues: 1-(5-phosphoribosyl)-5-[(5-phosphoribosylamino)methylideneamino] imidazole-4-carboxamide isomerase (251 aa).

The active-site Proton acceptor is the aspartate 8. The active-site Proton donor is the aspartate 131.

This sequence belongs to the HisA/HisF family.

It is found in the cytoplasm. It catalyses the reaction 1-(5-phospho-beta-D-ribosyl)-5-[(5-phospho-beta-D-ribosylamino)methylideneamino]imidazole-4-carboxamide = 5-[(5-phospho-1-deoxy-D-ribulos-1-ylimino)methylamino]-1-(5-phospho-beta-D-ribosyl)imidazole-4-carboxamide. Its pathway is amino-acid biosynthesis; L-histidine biosynthesis; L-histidine from 5-phospho-alpha-D-ribose 1-diphosphate: step 4/9. In Burkholderia cenocepacia (strain HI2424), this protein is 1-(5-phosphoribosyl)-5-[(5-phosphoribosylamino)methylideneamino] imidazole-4-carboxamide isomerase.